We begin with the raw amino-acid sequence, 170 residues long: Adenine phosphoribosyltransferase (170 aa).

It belongs to the purine/pyrimidine phosphoribosyltransferase family. In terms of assembly, homodimer.

It is found in the cytoplasm. It catalyses the reaction AMP + diphosphate = 5-phospho-alpha-D-ribose 1-diphosphate + adenine. The protein operates within purine metabolism; AMP biosynthesis via salvage pathway; AMP from adenine: step 1/1. Catalyzes a salvage reaction resulting in the formation of AMP, that is energically less costly than de novo synthesis. The polypeptide is Adenine phosphoribosyltransferase (Thermotoga sp. (strain RQ2)).